Here is a 399-residue protein sequence, read N- to C-terminus: UDP-N-acetylglucosamine--N-acetylmuramyl-(pentapeptide) pyrophosphoryl-undecaprenol N-acetylglucosamine transferase (399 aa).

UDP-N-acetyl-alpha-D-glucosamine is bound by residues 29–31, N148, R185, S219, and Q318; that span reads TAG.

It belongs to the glycosyltransferase 28 family. MurG subfamily.

The protein localises to the cell membrane. It carries out the reaction di-trans,octa-cis-undecaprenyl diphospho-N-acetyl-alpha-D-muramoyl-L-alanyl-D-glutamyl-meso-2,6-diaminopimeloyl-D-alanyl-D-alanine + UDP-N-acetyl-alpha-D-glucosamine = di-trans,octa-cis-undecaprenyl diphospho-[N-acetyl-alpha-D-glucosaminyl-(1-&gt;4)]-N-acetyl-alpha-D-muramoyl-L-alanyl-D-glutamyl-meso-2,6-diaminopimeloyl-D-alanyl-D-alanine + UDP + H(+). Its pathway is cell wall biogenesis; peptidoglycan biosynthesis. Cell wall formation. Catalyzes the transfer of a GlcNAc subunit on undecaprenyl-pyrophosphoryl-MurNAc-pentapeptide (lipid intermediate I) to form undecaprenyl-pyrophosphoryl-MurNAc-(pentapeptide)GlcNAc (lipid intermediate II). The polypeptide is UDP-N-acetylglucosamine--N-acetylmuramyl-(pentapeptide) pyrophosphoryl-undecaprenol N-acetylglucosamine transferase (Mycobacterium ulcerans (strain Agy99)).